Consider the following 303-residue polypeptide: Mitochondrial substrate carrier family protein E (303 aa).

Residues 1–8 (MENKKESS) are Mitochondrial intermembrane-facing. 3 Solcar repeats span residues 6–93 (ESSL…SKQW), 104–197 (ESTI…CKST), and 210–298 (LPIP…LKYL). The helical transmembrane segment at 9 to 29 (LLYILTGATSGLLADSIMHPV) threads the bilayer. Residues 30 to 67 (DTVRARVQIEKVGKSQYKGTFNALNQIIKNEGVSYLYK) are Mitochondrial matrix-facing. The helical transmembrane segment at 68–88 (GFPIVATATVPAHALYFLGYE) threads the bilayer. Over 89–109 (YSKQWVTDRYGKKWGESTITH) the chain is Mitochondrial intermembrane. A helical membrane pass occupies residues 110-130 (FSAGFVADALGSLIWVPMDII). The Mitochondrial matrix segment spans residues 131–171 (KQRLQVQTNTQKLNPNQTYYKGSFHAGKIILQEEGIRGLYR). The chain crosses the membrane as a helical span at residues 172-192 (GFMPALATYGPFVGIYFSVYE). The Mitochondrial intermembrane portion of the chain corresponds to 193–215 (KCKSTISSLLSKEKDQYLPIPYQ). A helical membrane pass occupies residues 216–236 (LGSGFFAGAFAAAVTCPLDVI). The Mitochondrial matrix portion of the chain corresponds to 237 to 268 (KTRIQVQRSTEKQIYKGMWDSFKTILKEEGPK). The helical transmembrane segment at 269 to 289 (AFVKGMGARIWWIAPGNALTI) threads the bilayer. Residues 290 to 303 (ASYEQLKYLFKDLI) lie on the Mitochondrial intermembrane side of the membrane.

This sequence belongs to the mitochondrial carrier (TC 2.A.29) family.

The protein resides in the mitochondrion inner membrane. Mitochondrial solute carriers shuttle metabolites, nucleotides, and cofactors through the mitochondrial inner membrane. This chain is Mitochondrial substrate carrier family protein E (mcfE), found in Dictyostelium discoideum (Social amoeba).